A 186-amino-acid polypeptide reads, in one-letter code: Tumor necrosis factor alpha-induced protein 8-like protein 2 (186 aa).

This sequence belongs to the TNFAIP8 family. TNFAIP8L2 subfamily.

Functionally, acts as a negative regulator of innate and adaptive immunity by maintaining immune homeostasis. Negative regulator of Toll-like receptor and T-cell receptor function. Prevents hyperresponsiveness of the immune system and maintains immune homeostasis. Inhibits jun/ap1 and NF-kappa-B activation. Promotes Fas-induced apoptosis. The protein is Tumor necrosis factor alpha-induced protein 8-like protein 2 (tnfaip8l2) of Xenopus laevis (African clawed frog).